A 318-amino-acid polypeptide reads, in one-letter code: MSNIIKYKKKILNGDLLTKEEVEELLEEDITDLAATANEIRESLCGNKFDLCTIINGKSGRCQENCKYCAQSAHFDTDIIEYNILNSDRIINSAISNYNKGVHRFSVVTSGRALNNNEVDTLCKTYSKLKETCSIRLCASHGLLKYEDLKRLKDSGVTRYHNNLETSRKFFTKICTTHKYDDKIETIKNAKKAGIEICSGGIIGLGETMEDRIDMAFTLRELSVESVPVNILNPIKGTPLENQEILSYEEIIKTLALFRFILPTVQIRLAGGRTIISDKGKKALESGVNGAISGDMLTTLGIETSEDIKMIKNLGFEV.

Residues 44-273 (LCGNKFDLCT…TVQIRLAGGR (230 aa)) enclose the Radical SAM core domain. The [4Fe-4S] cluster site is built by cysteine 62, cysteine 66, and cysteine 69. 4 residues coordinate [2Fe-2S] cluster: serine 106, cysteine 138, cysteine 198, and arginine 268.

The protein belongs to the radical SAM superfamily. Biotin synthase family. Homodimer. [4Fe-4S] cluster serves as cofactor. Requires [2Fe-2S] cluster as cofactor.

The enzyme catalyses (4R,5S)-dethiobiotin + (sulfur carrier)-SH + 2 reduced [2Fe-2S]-[ferredoxin] + 2 S-adenosyl-L-methionine = (sulfur carrier)-H + biotin + 2 5'-deoxyadenosine + 2 L-methionine + 2 oxidized [2Fe-2S]-[ferredoxin]. The protein operates within cofactor biosynthesis; biotin biosynthesis; biotin from 7,8-diaminononanoate: step 2/2. In terms of biological role, catalyzes the conversion of dethiobiotin (DTB) to biotin by the insertion of a sulfur atom into dethiobiotin via a radical-based mechanism. The polypeptide is Biotin synthase (Clostridium botulinum (strain Hall / ATCC 3502 / NCTC 13319 / Type A)).